Consider the following 261-residue polypeptide: MKVQIYQLPIVFGDSSKNETQITQWFEKNMNAEVDVVVLPEMWNNGYDLEHLNEKADNNLGQSFSFIKHLAEKYKVDIVAGSVSNIRNNQIFNTAFSVNKSGQLINEYDKVHLVPMLREHEFLTAGEYVAEPFQLSDGTYVTQLICYDLRFPELLRYPARSGAKIAFYVAQWPMSRLQHWHSLLKARAIENNMFVIGTNSTGFDGNTEYAGHSIVINPNGDLVGELNESADILTVDLNLNEVEQQRENIPVFKSIKLDLYK.

The region spanning 1–239 (MKVQIYQLPI…ADILTVDLNL (239 aa)) is the CN hydrolase domain. Glu41 serves as the catalytic Proton acceptor. The active-site Proton donor is the Lys110. Cys146 (nucleophile) is an active-site residue.

It belongs to the carbon-nitrogen hydrolase superfamily. NIT1/NIT2 family.

This Staphylococcus aureus protein is Hydrolase in agr operon.